A 577-amino-acid polypeptide reads, in one-letter code: Proline--tRNA ligase (577 aa).

It belongs to the class-II aminoacyl-tRNA synthetase family. ProS type 1 subfamily. As to quaternary structure, homodimer.

The protein resides in the cytoplasm. The enzyme catalyses tRNA(Pro) + L-proline + ATP = L-prolyl-tRNA(Pro) + AMP + diphosphate. In terms of biological role, catalyzes the attachment of proline to tRNA(Pro) in a two-step reaction: proline is first activated by ATP to form Pro-AMP and then transferred to the acceptor end of tRNA(Pro). As ProRS can inadvertently accommodate and process non-cognate amino acids such as alanine and cysteine, to avoid such errors it has two additional distinct editing activities against alanine. One activity is designated as 'pretransfer' editing and involves the tRNA(Pro)-independent hydrolysis of activated Ala-AMP. The other activity is designated 'posttransfer' editing and involves deacylation of mischarged Ala-tRNA(Pro). The misacylated Cys-tRNA(Pro) is not edited by ProRS. In Thermotoga maritima (strain ATCC 43589 / DSM 3109 / JCM 10099 / NBRC 100826 / MSB8), this protein is Proline--tRNA ligase.